A 1032-amino-acid polypeptide reads, in one-letter code: Connector enhancer of kinase suppressor of ras 2 (1032 aa).

The region spanning W11–L76 is the SAM domain. S12 is modified (phosphoserine). The 95-residue stretch at N84–Y178 folds into the CRIC domain. Residues V215 to P297 form the PDZ domain. The segment covering R324–P340 has biased composition (low complexity). The disordered stretch occupies residues R324 to Q349. A DUF1170 domain is found at T332 to L515. Phosphoserine occurs at positions 338 and 390. The interval E480–Y509 is disordered. The 100-residue stretch at R570–A669 folds into the PH domain. A disordered region spans residues D682–R766. Y683 is subject to Phosphotyrosine. Acidic residues predominate over residues Y683–D693. 2 positions are modified to phosphoserine: S685 and S687. Over residues D701–P714 the composition is skewed to pro residues. Residues L730 to S740 are compositionally biased toward low complexity. A phosphoserine mark is found at S756 and S767. Residues D866–E900 are disordered. Positions P874 to A917 form a coiled coil. A compositionally biased stretch (acidic residues) spans E875–A888. Residue S906 is modified to Phosphoserine.

It belongs to the CNKSR family. As to quaternary structure, interacts with RAF1, RAB2L and RAL GTPase proteins. Interacts with DLG4 and AIP1. Post-translationally, phosphorylated on tyrosine. Expressed in neurons and localized in the cell body and neurites.

It localises to the cytoplasm. It is found in the membrane. May function as an adapter protein or regulator of Ras signaling pathways, in synaptic junctions. The sequence is that of Connector enhancer of kinase suppressor of ras 2 (Cnksr2) from Rattus norvegicus (Rat).